Reading from the N-terminus, the 107-residue chain is Thioredoxin (107 aa).

One can recognise a Thioredoxin domain in the interval 2–107; that stretch reads VVHIENLNAF…TLKQKINDHK (106 aa). Residues Cys-32 and Cys-35 each act as nucleophile in the active site. A disulfide bond links Cys-32 and Cys-35. 2 positions are modified to S-nitrosocysteine: Cys-71 and Cys-75.

The protein belongs to the thioredoxin family. Post-translationally, may be nitrosylated on several cysteine residues, depending on the oxidation state. Nitrosylated Cys-75 may serve as donor for nitrosylation of target proteins.

Its subcellular location is the nucleus. The protein resides in the cytoplasm. The protein localises to the secreted. Participates in various redox reactions through the reversible oxidation of its active center dithiol to a disulfide and catalyzes dithiol-disulfide exchange reactions. Plays a role in the reversible S-nitrosylation of cysteine residues in target proteins, and thereby contributes to the response to intracellular nitric oxide. Nitrosylates the active site Cys of CASP3 in response to nitric oxide (NO), and thereby inhibits caspase-3 activity. Induces the FOS/JUN AP-1 DNA binding activity in ionizing radiation (IR) cells through its oxidation/reduction status and stimulates AP-1 transcriptional activity. The chain is Thioredoxin (txn) from Ictalurus punctatus (Channel catfish).